A 732-amino-acid chain; its full sequence is Polyadenylate-binding protein, cytoplasmic and nuclear (732 aa).

A compositionally biased stretch (polar residues) spans 1 to 19 (MSAETSTTPAPAENTNGTP). The tract at residues 1–26 (MSAETSTTPAPAENTNGTPDNAPAPE) is disordered. RRM domains lie at 42–120 (ASLY…WSQR), 130–207 (GNVF…HHIS), 223–300 (TNIY…RAQK), and 326–454 (VNLY…LAQR). 2 disordered regions span residues 357–413 (VMRD…KKPL) and 706–732 (MKNK…ENKA). Residues 371–412 (SETKESANKENEKAAEGEKEPAAEEKEKEEKKEAEQKPEKKP) are compositionally biased toward basic and acidic residues. A PABC domain is found at 630–707 (VGVLTAQALS…ALSVYDEYMK (78 aa)).

The protein belongs to the polyadenylate-binding protein type-1 family.

The protein resides in the cytoplasm. It is found in the nucleus. Its function is as follows. Binds the poly(A) tail of mRNA. Appears to be an important mediator of the multiple roles of the poly(A) tail in mRNA biogenesis, stability and translation. In the nucleus, involved in both mRNA cleavage and polyadenylation. Is also required for efficient mRNA export to the cytoplasm. Acts in concert with a poly(A)-specific nuclease (PAN) to affect poly(A) tail shortening, which may occur concomitantly with either nucleocytoplasmic mRNA transport or translational initiation. In the cytoplasm, stimulates translation initiation and regulates mRNA decay through translation termination-coupled poly(A) shortening, probably mediated by PAN. This Emericella nidulans (strain FGSC A4 / ATCC 38163 / CBS 112.46 / NRRL 194 / M139) (Aspergillus nidulans) protein is Polyadenylate-binding protein, cytoplasmic and nuclear (pab1).